A 451-amino-acid chain; its full sequence is Cysteine desulfurase (451 aa).

Positions 121, 122, 229, 249, and 251 each coordinate pyridoxal 5'-phosphate. An N6-(pyridoxal phosphate)lysine modification is found at lysine 252. Threonine 289 serves as a coordination point for pyridoxal 5'-phosphate. The Cysteine persulfide intermediate role is filled by cysteine 375. A [2Fe-2S] cluster-binding site is contributed by cysteine 375. Cysteine 375 serves as a coordination point for Zn(2+). The residue at position 375 (cysteine 375) is a Cysteine persulfide.

This sequence belongs to the class-V pyridoxal-phosphate-dependent aminotransferase family. NifS/IscS subfamily. In terms of assembly, homodimer. Component of the mitochondrial core iron-sulfur cluster (ISC) complex composed of NFS1, LYRM4, NDUFAB1, ISCU, FXN, and FDX2; this complex is a heterohexamer containing two copies of each monomer. Component of cyteine desulfurase complex composed of NFS1, LYRM4 and NDUFAB1; this complex contributes to the activation of cysteine desulfurase activity and NFS1 stabilization. Interacts (homodimer form) with ISCU (D-state); each monomer interacts with the C-terminal regions of each NFS1 monomer. Interacts with HSPA9. Interacts (via homodimer form) with FDX2. Interacts (via homodimer form) with FXN. Interacts with LYRM4. Component of a complex composed of FXN, NFS1, LYRM4 and ISCU. As to quaternary structure, monomer. Homodimer. Oligomer. Interacts with ISCU. Component of the cysteine desulfurase complex composed of NFS1 and LYRM4; this complex contributes to the activation of cysteine desulfurase activity. Interacts with MOCS3. It depends on pyridoxal 5'-phosphate as a cofactor. Post-translationally, N-gluconoylated. Cysteine persulfide intermediate is reduced by thiol-containing molecules like glutathione and L-cysteine. Persulfide reduction is a rate-limiting step of cysteine desulfurase catalytic cycle.

The protein localises to the mitochondrion. It localises to the cytoplasm. Its subcellular location is the nucleus. It is found in the cytoskeleton. The protein resides in the microtubule organizing center. The protein localises to the centrosome. It catalyses the reaction (sulfur carrier)-H + L-cysteine = (sulfur carrier)-SH + L-alanine. It carries out the reaction L-cysteinyl-[cysteine desulfurase] + L-cysteine = S-sulfanyl-L-cysteinyl-[cysteine desulfurase] + L-alanine. Its activity is regulated as follows. Active only in complex with LYRM4. Cysteine desulfurase, of the core iron-sulfur cluster (ISC) assembly complex, that catalyzes the desulfuration of L-cysteine to L-alanine, as component of the cysteine desulfurase complex leading to the formation of a cysteine persulfide intermediate at the active site cysteine residue and participates in the [2Fe-2S] clusters assembly on the scaffolding protein ISCU. The persulfide is then transferred on the flexible Cys loop from the catalytic site of NFS1 to the surface of NFS1. After the NFS1-linked persulfide sulfur is transferred to one of the conserved Cys residues of the scaffold, a reaction assisted by FXN. The core iron-sulfur cluster (ISC) assembly complex is involved in the de novo synthesis of a [2Fe-2S] cluster, the first step of the mitochondrial iron-sulfur protein biogenesis. This process is initiated by the cysteine desulfurase complex (NFS1:LYRM4:NDUFAB1) that produces persulfide which is delivered on the scaffold protein ISCU in a FXN-dependent manner. Then this complex is stabilized by FDX2 which provides reducing equivalents to accomplish the [2Fe-2S] cluster assembly. Finally, the [2Fe-2S] cluster is transferred from ISCU to chaperone proteins, including HSCB, HSPA9 and GLRX5. Functionally, may catalyze the desulfuration of L-cysteine to L-alanine as component of the cysteine desulfurase complex (NFS1:LYRM4), leading to the formation of a cysteine persulfide intermediate. Acts as a sulfur donor for MOCS3 by transferring the sulfur of the cysteine persulfide intermediate on MOCS3. This is Cysteine desulfurase from Rattus norvegicus (Rat).